We begin with the raw amino-acid sequence, 72 residues long: UPF0346 protein GK1571 (72 aa).

The protein belongs to the UPF0346 family.

The sequence is that of UPF0346 protein GK1571 from Geobacillus kaustophilus (strain HTA426).